The sequence spans 237 residues: LexA repressor (237 aa).

The segment at residues 26 to 46 is a DNA-binding region (H-T-H motif); that stretch reads FDEMKIALELTSKSGIHRLIT. Catalysis depends on for autocatalytic cleavage activity residues Ser-158 and Lys-196.

This sequence belongs to the peptidase S24 family. As to quaternary structure, homodimer.

The catalysed reaction is Hydrolysis of Ala-|-Gly bond in repressor LexA.. Represses a number of genes involved in the response to DNA damage (SOS response), including recA and lexA. In the presence of single-stranded DNA, RecA interacts with LexA causing an autocatalytic cleavage which disrupts the DNA-binding part of LexA, leading to derepression of the SOS regulon and eventually DNA repair. In Bartonella quintana (strain Toulouse) (Rochalimaea quintana), this protein is LexA repressor.